The chain runs to 311 residues: Hevamine-A (311 aa).

The signal sequence occupies residues 1–26 (MAKRTQAILLLLLAISLIMSSSHVDG). Residues 27–302 (GGIAIYWGQN…SSILDSVLFL (276 aa)) form the GH18 domain. 2 cysteine pairs are disulfide-bonded: C46/C93 and C76/C83. Catalysis depends on E153, which acts as the Proton donor. C185 and C214 are disulfide-bonded. A propeptide spans 300-311 (LFLHSEECMTVL) (removed in mature form).

It belongs to the glycosyl hydrolase 18 family. Chitinase class II subfamily.

It localises to the vacuole. The enzyme catalyses Random endo-hydrolysis of N-acetyl-beta-D-glucosaminide (1-&gt;4)-beta-linkages in chitin and chitodextrins.. It carries out the reaction Hydrolysis of (1-&gt;4)-beta-linkages between N-acetylmuramic acid and N-acetyl-D-glucosamine residues in a peptidoglycan and between N-acetyl-D-glucosamine residues in chitodextrins.. Its function is as follows. Bifunctional enzyme with lysozyme / chitinase activity. May have a role in plugging the latex vessel and cessation of latex flow. The protein is Hevamine-A of Hevea brasiliensis (Para rubber tree).